The following is a 161-amino-acid chain: MRHRVGGWKLGRNTEHRRALLRNLVTSLIVEERIETTVPKAKAMRPHVEKMITLGKQGNVAARRQAAAYLMTSEAVDKLFNTISPRFGDREGGYLRIVRTGFRPGDGGEKAFIELLGSEKIIDEKREKRAAARAKRAEDNRKALEAQQAQAEAETTGETKA.

Residues 132–144 (ARAKRAEDNRKAL) show a composition bias toward basic and acidic residues. The tract at residues 132–161 (ARAKRAEDNRKALEAQQAQAEAETTGETKA) is disordered. Positions 145 to 161 (EAQQAQAEAETTGETKA) are enriched in low complexity.

The protein belongs to the bacterial ribosomal protein bL17 family. Part of the 50S ribosomal subunit. Contacts protein L32.

The protein is Large ribosomal subunit protein bL17 of Koribacter versatilis (strain Ellin345).